The following is a 575-amino-acid chain: Dihydroxy-acid dehydratase (575 aa).

Positions 1–27 (MSNQERQERPEKDPDLRSTEVTEGYEK) are disordered. A [2Fe-2S] cluster-binding site is contributed by cysteine 61. Mg(2+) is bound at residue aspartate 93. [2Fe-2S] cluster is bound at residue cysteine 134. 2 residues coordinate Mg(2+): aspartate 135 and lysine 136. Lysine 136 carries the N6-carboxylysine modification. Cysteine 206 serves as a coordination point for [2Fe-2S] cluster. Glutamate 460 serves as a coordination point for Mg(2+). Catalysis depends on serine 486, which acts as the Proton acceptor.

The protein belongs to the IlvD/Edd family. Homodimer. It depends on [2Fe-2S] cluster as a cofactor. Mg(2+) is required as a cofactor.

The enzyme catalyses (2R)-2,3-dihydroxy-3-methylbutanoate = 3-methyl-2-oxobutanoate + H2O. The catalysed reaction is (2R,3R)-2,3-dihydroxy-3-methylpentanoate = (S)-3-methyl-2-oxopentanoate + H2O. It functions in the pathway amino-acid biosynthesis; L-isoleucine biosynthesis; L-isoleucine from 2-oxobutanoate: step 3/4. The protein operates within amino-acid biosynthesis; L-valine biosynthesis; L-valine from pyruvate: step 3/4. Its function is as follows. Functions in the biosynthesis of branched-chain amino acids. Catalyzes the dehydration of (2R,3R)-2,3-dihydroxy-3-methylpentanoate (2,3-dihydroxy-3-methylvalerate) into 2-oxo-3-methylpentanoate (2-oxo-3-methylvalerate) and of (2R)-2,3-dihydroxy-3-methylbutanoate (2,3-dihydroxyisovalerate) into 2-oxo-3-methylbutanoate (2-oxoisovalerate), the penultimate precursor to L-isoleucine and L-valine, respectively. In Haloarcula marismortui (strain ATCC 43049 / DSM 3752 / JCM 8966 / VKM B-1809) (Halobacterium marismortui), this protein is Dihydroxy-acid dehydratase.